A 40-amino-acid polypeptide reads, in one-letter code: Peroxisomal LYS1 stabilizing protein 1 (40 aa).

Residues 1 to 10 show a composition bias toward polar residues; that stretch reads MTAKTKQSWN. The tract at residues 1 to 20 is disordered; sequence MTAKTKQSWNKGIWENGKQG.

The protein resides in the cytoplasm. Its subcellular location is the cytosol. It localises to the peroxisome matrix. Its function is as follows. Modulates the lysine biosynthesis pathway, possibly by stabilizing the lysine biosynthesis LYS1 protein in lysine-deplete conditions. This Saccharomyces cerevisiae (strain ATCC 204508 / S288c) (Baker's yeast) protein is Peroxisomal LYS1 stabilizing protein 1.